A 203-amino-acid chain; its full sequence is Abscisic acid receptor PYL5 (203 aa).

Over residues 1–18 (MRSPVQLQHGSDATNGFH) the composition is skewed to polar residues. Residues 1–29 (MRSPVQLQHGSDATNGFHTLQPHDQTDGP) form a disordered region. An START-like region spans residues 51-201 (HDVGPDQCCS…NLQSLARSTN (151 aa)). Abscisate is bound by residues K87, 117 to 122 (AVSSTE), 144 to 150 (RLKNYRS), and E166. The Gate loop motif lies at 113–117 (SGLPA). Residues 143 to 145 (HRL) carry the Latch loop motif.

It belongs to the PYR/PYL/RCAR abscisic acid intracellular receptor family. In terms of assembly, monomer. Homodimer. Binds ABA on one subunit only. Binds to CARs protein in an ABA-independent manner, both at the plasma membrane and in the nucleus. Binds both (-)-ABA and (+)-ABA. Interacts with HAB1, ABI1 and ABI2, and possibly with other PP2Cs.

Its subcellular location is the cytoplasm. It localises to the nucleus. It is found in the cell membrane. Functionally, receptor for abscisic acid (ABA) required for ABA-mediated responses such as stomatal closure and germination inhibition. Inhibits the activity of group-A protein phosphatases type 2C (PP2Cs) in an ABA-independent manner but more efficiently when activated by ABA. Confers enhanced sensitivity to ABA. Can be activated by both (-)-ABA and (+)-ABA. The protein is Abscisic acid receptor PYL5 (PYL5) of Arabidopsis thaliana (Mouse-ear cress).